A 96-amino-acid polypeptide reads, in one-letter code: Small ribosomal subunit protein bS6 (96 aa).

Belongs to the bacterial ribosomal protein bS6 family.

Its function is as follows. Binds together with bS18 to 16S ribosomal RNA. This Streptomyces griseus subsp. griseus (strain JCM 4626 / CBS 651.72 / NBRC 13350 / KCC S-0626 / ISP 5235) protein is Small ribosomal subunit protein bS6.